Reading from the N-terminus, the 144-residue chain is Nucleoside diphosphate kinase (144 aa).

ATP is bound by residues Lys9, Phe57, Arg85, Thr91, Arg102, and Asn112. His115 functions as the Pros-phosphohistidine intermediate in the catalytic mechanism.

It belongs to the NDK family. In terms of assembly, homotetramer. Mg(2+) is required as a cofactor.

It is found in the cytoplasm. It catalyses the reaction a 2'-deoxyribonucleoside 5'-diphosphate + ATP = a 2'-deoxyribonucleoside 5'-triphosphate + ADP. It carries out the reaction a ribonucleoside 5'-diphosphate + ATP = a ribonucleoside 5'-triphosphate + ADP. In terms of biological role, major role in the synthesis of nucleoside triphosphates other than ATP. The ATP gamma phosphate is transferred to the NDP beta phosphate via a ping-pong mechanism, using a phosphorylated active-site intermediate. This is Nucleoside diphosphate kinase from Chlamydia pneumoniae (Chlamydophila pneumoniae).